Consider the following 222-residue polypeptide: UPF0758 protein YicR (222 aa).

The region spanning 100 to 222 is the MPN domain; that stretch reads PLLSPEMTRE…YVSFAERGWI (123 aa). Residues His-171, His-173, and Asp-184 each contribute to the Zn(2+) site. Residues 171–184 carry the JAMM motif motif; sequence HNHPSGCAEPSKAD.

It belongs to the UPF0758 family. YicR subfamily.

This Escherichia coli O9:H4 (strain HS) protein is UPF0758 protein YicR.